A 201-amino-acid polypeptide reads, in one-letter code: Heat shock protein beta-1 (201 aa).

At serine 15 the chain carries Phosphoserine; by PKA and PKC. The sHSP domain occupies alanine 83–glutamate 193.

This sequence belongs to the small heat shock protein (HSP20) family. As to quaternary structure, homooligomer. Homodimer; becomes monomeric upon activation. Heterooligomer.

It localises to the cytoplasm. It is found in the nucleus. The protein localises to the cytoskeleton. The protein resides in the spindle. Functionally, small heat shock protein which functions as a molecular chaperone probably maintaining denatured proteins in a folding-competent state. Plays a role in stress resistance and actin organization. The chain is Heat shock protein beta-1 (hspb1) from Poeciliopsis lucida (Desert topminnow).